We begin with the raw amino-acid sequence, 114 residues long: Nucleoid-associated protein Cyan7425_0899 (114 aa).

Belongs to the YbaB/EbfC family. In terms of assembly, homodimer.

It is found in the cytoplasm. The protein localises to the nucleoid. Its function is as follows. Binds to DNA and alters its conformation. May be involved in regulation of gene expression, nucleoid organization and DNA protection. This Cyanothece sp. (strain PCC 7425 / ATCC 29141) protein is Nucleoid-associated protein Cyan7425_0899.